A 559-amino-acid polypeptide reads, in one-letter code: Hepatocyte nuclear factor 1-beta (559 aa).

Residues 1-31 form a dimerization region; the sequence is MVSKLTSLQQELLSALLSSGVTKEVLVQALE. In terms of domain architecture, HNF-p1 spans 1–32; sequence MVSKLTSLQQELLSALLSSGVTKEVLVQALEE. A phosphoserine mark is found at serine 49, serine 52, serine 75, and serine 80. A POU-specific atypical domain is found at 93–188; sequence KELQALNTEE…ILRQFNQTVQ (96 aa). A DNA-binding region (homeobox; HNF1-type) is located at residues 231–312; it reads MRRNRFKWGP…RRKEEEAFRQ (82 aa). Over residues 328–341 the composition is skewed to low complexity; it reads NTLLSHSSPHHQPS. Residues 328–371 form a disordered region; that stretch reads NTLLSHSSPHHQPSTSPPNKLPGVRYNQQGNNEVTSSSTISHHG. Polar residues predominate over residues 353-371; sequence YNQQGNNEVTSSSTISHHG.

Belongs to the HNF1 homeobox family. Binds DNA as a dimer. Can form homodimer or heterodimer with HNF1-alpha. Interacts (via HNF-p1 domain) with PCBD1; the interaction increases its transactivation activity.

Its subcellular location is the nucleus. Transcription factor that binds to the inverted palindrome 5'-GTTAATNATTAAC-3'. Binds to the FPC element in the cAMP regulatory unit of the PLAU gene. Transcriptional activity is increased by coactivator PCBD1. The polypeptide is Hepatocyte nuclear factor 1-beta (HNF1B) (Sus scrofa (Pig)).